Reading from the N-terminus, the 2387-residue chain is Paternally-expressed gene 3 protein (2387 aa).

Positions 44-126 (HQRFRNFLYV…ALLEDYEAMY (83 aa)) constitute an SCAN box domain. Disordered regions lie at residues 127–194 (EPED…RDLA), 262–305 (DGHS…ICEA), 321–371 (ARSS…AFGG), and 392–423 (RYHFDAEGQGPVHDPRGGARKRPFECGGEARR). 4 stretches are compositionally biased toward basic and acidic residues: residues 160–179 (SERERRRGRSRDMESRDRWP), 291–305 (PETKKSAHRRGICEA), 321–364 (ARSS…ERGP), and 404–423 (HDPRGGARKRPFECGGEARR). Residues 451–473 (YVCDECGRSFAVISEFVEHQIVH) form a C2H2-type 1 zinc finger. Positions 492–542 (SEAQSRPEGARRSEGAQAAGLAEHRGGQAQEHLRGSGDEEQDEPFLPSPTF) are disordered. Over residues 513-528 (AEHRGGQAQEHLRGSG) the composition is skewed to basic and acidic residues. C2H2-type zinc fingers lie at residues 555–577 (YECKVCKETFLHSSALIEHQKIH) and 610–632 (YECKVCGETFHHSAALREHQKTH). A C2H2-type 4; degenerate zinc finger spans residues 668–690 (YDFREGGDAFGRSSDFMEHQKIH). 3 disordered regions span residues 704-747 (PLLH…EARG), 764-797 (FRPPRGLREDGEPSTYLSGLRDPPQKTPAWESPY), and 820-858 (DHLAGEGPSGWQRDGEASGPSSDGRQHQKARAKKKNIER). A compositionally biased stretch (polar residues) spans 711–720 (MPGSQKSHTI). A compositionally biased stretch (basic residues) spans 846 to 856 (HQKARAKKKNI). Residues 884–906 (YECLECGEFFVRSSELAEHQKIH) form a C2H2-type 5 zinc finger. 57 consecutive repeat copies span residues 965–973 (PAQTSYAVE), 974–982 (PAQTSYAEE), 983–991 (PAQTSYTEA), 1001–1009 (PAQTSCIEE), 1010–1018 (PAQTSYTNP), 1028–1036 (PAQTSYTEA), 1046–1054 (PAQTSCIEE), 1055–1063 (PAQTSYTNP), 1073–1081 (PAQTSYTEA), 1091–1099 (PAQTNYTEE), 1109–1117 (PSQTSCIEE), 1118–1126 (PAQTSYTDP), 1136–1144 (PAQTSYTQE), 1145–1153 (PAQTSCTEE), 1154–1162 (PAQTSCTEE), 1163–1171 (PAQTSYTQE), 1172–1180 (PAQTSYTKE), 1190–1198 (PAQTSCIEE), 1199–1207 (PAQTNYTKE), 1217–1225 (PAQTSYTDP), 1235–1243 (PAQTNYTVE), 1253–1261 (PSQTSCIEE), 1280–1288 (PAQTSCTEE), 1289–1297 (PAQTSYTQE), 1298–1306 (PAQTSCTEE), 1307–1315 (PAQTSCTEE), 1316–1324 (PAQTSYTQE), 1325–1333 (PAQTSCTEE), 1334–1342 (PAQTSYTQE), 1343–1351 (PAQTSCTEE), 1352–1360 (PAQTSYTEE), 1361–1369 (PAQTSYTEE), 1370–1378 (PAQTSYTQE), 1379–1387 (PAQTSCTEE), 1388–1396 (PAQTSYTEE), 1397–1405 (PAQTSYTEE), 1406–1414 (PAQTSYTQE), 1415–1423 (PAQTSYTEE), 1424–1432 (PAQTSYTEE), 1433–1441 (PAQTSYAQE), 1442–1450 (PAQTSYAEE), 1451–1459 (PAQTSYAEE), 1460–1468 (PAQTSYAEE), 1469–1477 (PAQTSYTQE), 1478–1486 (PAQTNYTEE), 1496–1504 (PAQTSYAEE), 1505–1513 (PAQTSYPEE), 1514–1522 (PAQTSYAEE), 1523–1531 (PAQTSYAEE), 1532–1540 (PAQTSYPEE), 1541–1549 (PAQTSYTEE), 1550–1558 (PAQTSYAKE), 1559–1567 (PAQTSYPEE), 1568–1576 (PAQTSYAEE), 1577–1585 (PAQTSYAEE), 1586–1594 (PAQTSYAEE), and 1595–1603 (PAQTSYSEE). Composition is skewed to polar residues over residues 965–989 (PAQTSYAVEPAQTSYAEEPAQTSYT) and 1001–1020 (PAQTSCIEEPAQTSYTNPAA). Residues 965 to 1603 (PAQTSYAVEP…EPAQTSYSEE (639 aa)) are 37 X 9 AA repeat of P-A-Q-T-X-Y-X-X-E. The disordered stretch occupies residues 965 to 1651 (PAQTSYAVEP…RPDMPRNQPR (687 aa)). Polar residues predominate over residues 1046 to 1079 (PAQTSCIEEPAQTSYTNPAAETSYTEEPAQTSYT). Composition is skewed to polar residues over residues 1107-1178 (EEPS…TSYT), 1190-1206 (PAQTSCIEEPAQTNYTK), 1217-1242 (PAQTSYTDPAAETSYTEEPAQTNYTV), 1251-1484 (EEPS…TNYT), and 1496-1601 (PAQT…TSYS). The C2H2-type 6; degenerate zinc-finger motif lies at 1859-1881 (NECKECGECFATVEDLGRHQKIY). The interval 1900 to 1921 (LGLDGSPEEELEEQEEPEEPED) is disordered. Over residues 1905–1921 (SPEEELEEQEEPEEPED) the composition is skewed to acidic residues. 5 C2H2-type zinc fingers span residues 1924-1946 (YGCKDCGLGFADRADLRDHQKVH), 1980-2002 (YECPACGESFVHSSFLFEHQKVH), 2040-2062 (PQCQVCGQDFIHASVLSEHARGH), 2097-2119 (YECETCGESFPSQADLQEHMRVH), and 2148-2170 (YECKDCGKSFIHSTILTKHQKLH). A disordered region spans residues 2059–2102 (ARGHAGEGLPDQGQGGAGAAGPGPAPTEPQQDPGEEQRYECETC). A disordered region spans residues 2204 to 2322 (NVEAAEPEVE…DCGECGETFP (119 aa)). 2 stretches are compositionally biased toward acidic residues: residues 2208–2228 (AEPEVEAAEPEVEAAEPEVEA) and 2257–2311 (EQPD…EEPY). 2 C2H2-type zinc fingers span residues 2312-2334 (YDCGECGETFPSGAAYAEHLTAH) and 2363-2385 (FKCDVCGQLFSDRLSLARHQNTH).

This sequence belongs to the krueppel C2H2-type zinc-finger protein family. In terms of assembly, homodimer. Interacts with SIAH1A and SIAH2. Interacts with TRAF2. As to expression, expressed at high levels in the cerebellum and at moderate levels in the testis and ovary.

It localises to the nucleus. The protein localises to the cytoplasm. Its function is as follows. Induces apoptosis in cooperation with SIAH1A. Acts as a mediator between p53/TP53 and BAX in a neuronal death pathway that is activated by DNA damage. Acts synergistically with TRAF2 and inhibits TNF induced apoptosis through activation of NF-kappa-B. The chain is Paternally-expressed gene 3 protein (PEG3) from Bos taurus (Bovine).